Reading from the N-terminus, the 378-residue chain is Phosphoserine aminotransferase (378 aa).

R53 lines the L-glutamate pocket. Positions 117, 167, 190, and 213 each coordinate pyridoxal 5'-phosphate. Residue K214 is modified to N6-(pyridoxal phosphate)lysine. Residue N255–T256 coordinates pyridoxal 5'-phosphate.

It belongs to the class-V pyridoxal-phosphate-dependent aminotransferase family. SerC subfamily. In terms of assembly, homodimer. Pyridoxal 5'-phosphate serves as cofactor.

Its subcellular location is the cytoplasm. It catalyses the reaction O-phospho-L-serine + 2-oxoglutarate = 3-phosphooxypyruvate + L-glutamate. It carries out the reaction 4-(phosphooxy)-L-threonine + 2-oxoglutarate = (R)-3-hydroxy-2-oxo-4-phosphooxybutanoate + L-glutamate. Its pathway is amino-acid biosynthesis; L-serine biosynthesis; L-serine from 3-phospho-D-glycerate: step 2/3. It functions in the pathway cofactor biosynthesis; pyridoxine 5'-phosphate biosynthesis; pyridoxine 5'-phosphate from D-erythrose 4-phosphate: step 3/5. In terms of biological role, catalyzes the reversible conversion of 3-phosphohydroxypyruvate to phosphoserine and of 3-hydroxy-2-oxo-4-phosphonooxybutanoate to phosphohydroxythreonine. This is Phosphoserine aminotransferase from Ralstonia pickettii (strain 12J).